The chain runs to 334 residues: Ornithine carbamoyltransferase (334 aa).

Residues 57–60 (STRT), glutamine 84, arginine 108, and 135–138 (HPTQ) contribute to the carbamoyl phosphate site. L-ornithine-binding positions include asparagine 169, aspartate 233, and 237-238 (SM). Carbamoyl phosphate is bound by residues 275-276 (CL) and arginine 320.

It belongs to the aspartate/ornithine carbamoyltransferase superfamily. OTCase family.

The protein resides in the cytoplasm. It catalyses the reaction carbamoyl phosphate + L-ornithine = L-citrulline + phosphate + H(+). The protein operates within amino-acid biosynthesis; L-arginine biosynthesis; L-arginine from L-ornithine and carbamoyl phosphate: step 1/3. Reversibly catalyzes the transfer of the carbamoyl group from carbamoyl phosphate (CP) to the N(epsilon) atom of ornithine (ORN) to produce L-citrulline. The chain is Ornithine carbamoyltransferase from Vibrio parahaemolyticus serotype O3:K6 (strain RIMD 2210633).